The chain runs to 178 residues: Probable apo-citrate lyase phosphoribosyl-dephospho-CoA transferase (178 aa).

The protein belongs to the CitX family.

The catalysed reaction is apo-[citrate lyase ACP] + 2'-(5''-triphospho-alpha-D-ribosyl)-3'-dephospho-CoA = holo-[citrate lyase ACP] + diphosphate. In terms of biological role, transfers 2-(5''-triphosphoribosyl)-3'-dephosphocoenzyme-A on a serine residue to the apo-acyl carrier protein (gamma chain) of the citrate lyase to yield holo-acyl carrier protein. This is Probable apo-citrate lyase phosphoribosyl-dephospho-CoA transferase from Vibrio cholerae serotype O1 (strain ATCC 39541 / Classical Ogawa 395 / O395).